Here is a 198-residue protein sequence, read N- to C-terminus: MGVDLTGISKKSRVIRHHTYSTNPYIKLLIKLYKFLAKRTSSGFNKVVYQRLIKSRSNRAPISLSRIAVVMKRKAVFTAKSKAAPIAVVVGDVLDDVRMARIPAMRVCALRFSKSARQSIVAAGGECLTFDQLAMIAPTGKNTYLLRGRKSGRESVRHFGASGVPGSHSKPYATNRGKETKRGRRTGRSYKRKAFRHV.

The segment at 157 to 198 (RHFGASGVPGSHSKPYATNRGKETKRGRRTGRSYKRKAFRHV) is disordered. Positions 179 to 198 (ETKRGRRTGRSYKRKAFRHV) are enriched in basic residues.

The protein belongs to the eukaryotic ribosomal protein eL18 family.

The protein localises to the cytoplasm. The chain is Large ribosomal subunit protein eL18 (RPL18-A) from Leishmania major.